A 779-amino-acid chain; its full sequence is MNNKILEQLEFNKVKELLLPYLKTEQSQEELLELEPMTEAPKIEKSFNEISDMEQIFVEHHSFGIVSLSSISESLKRLELSTDLNIQELLAIKKVLQSSSDMIHFYSDLDNVSFQSLDRLFENLEQFPNLQGSFQAINDGGFLEHFASPELERIRRQLTNSERRVRQILQDMLKEKAELLSENLIASRSGRSVLPVKNTYRNRISGVVHDISSSGSTVYIEPRAVVTLNEEITQLRADERHEEGRILHAFSDLLRPHVATIRNNAWILGHLDFVRAKYLFMSDNKATIPKISNDSTLALINVRHPLLSNPVANDLHFDHDLTAIVITGPNTGGKTIMLKTLGLAQLMGQSGLPVLADKGSKIAVFNNIFADIGDEQSIEQSLSTFSSHMTHIVSILNEADHNSLVLFDELGAGTDPQEGASLAMAILEHLRLSHIKTMATTHYPELKAYGIETNFVENASMEFDAETLSPTYRFMQGVPGRSNAFEIASRLGLAPFIVKQAKQMTDSDSDVNRIIEQLEAQTLETRRRLDHIKEVEQENLKFNRAVKKLYNEFSHERDKELEKIYQEAQEIVDMALNESDTILKKLNDKSQLKPHEIIDAKAQIKKLAPQVDLSKNKVLNKAKKIKAARAPRIGDDIIVTSYGQRGTLTSQLKDGRWEAQVGIIKMTLTQDEFSLVRVQEEQKVKNKQINVVKKADGSGPRARLDLRGKRYEEAMQELDHFIDQALLNNMGQVDIIHGIGTGVIREGVTKYLRRNKHVKHFAYAPQNAGGSGATIVTLG.

328-335 (GPNTGGKT) lines the ATP pocket. Residues 704–779 (LDLRGKRYEE…GSGATIVTLG (76 aa)) enclose the Smr domain.

The protein belongs to the DNA mismatch repair MutS family. MutS2 subfamily. As to quaternary structure, homodimer. Binds to stalled ribosomes, contacting rRNA.

Functionally, endonuclease that is involved in the suppression of homologous recombination and thus may have a key role in the control of bacterial genetic diversity. Acts as a ribosome collision sensor, splitting the ribosome into its 2 subunits. Detects stalled/collided 70S ribosomes which it binds and splits by an ATP-hydrolysis driven conformational change. Acts upstream of the ribosome quality control system (RQC), a ribosome-associated complex that mediates the extraction of incompletely synthesized nascent chains from stalled ribosomes and their subsequent degradation. Probably generates substrates for RQC. In Streptococcus pyogenes serotype M1, this protein is Endonuclease MutS2.